A 408-amino-acid polypeptide reads, in one-letter code: Serine/threonine-protein kinase UCNL (408 aa).

The Protein kinase domain maps to 21-341 (IKALKILGKG…AAEIKELAFF (321 aa)). Residues 27–35 (LGKGATGTV) and lysine 54 contribute to the ATP site. Aspartate 152 (proton acceptor) is an active-site residue. The region spanning 342–408 (AGVRWDLLTE…CRKNDPFIEF (67 aa)) is the AGC-kinase C-terminal domain.

It belongs to the protein kinase superfamily. AGC Ser/Thr protein kinase family. As to expression, expressed in the epidermis and cortex of the transition zone of the root apex. Expressed in rosette leaves, stems, flowers and siliques.

The protein localises to the cytoplasm. The protein resides in the nucleus. It catalyses the reaction L-seryl-[protein] + ATP = O-phospho-L-seryl-[protein] + ADP + H(+). The catalysed reaction is L-threonyl-[protein] + ATP = O-phospho-L-threonyl-[protein] + ADP + H(+). Regulates planar ovule integument development. The protein is Serine/threonine-protein kinase UCNL of Arabidopsis thaliana (Mouse-ear cress).